A 148-amino-acid chain; its full sequence is Snaclec B4 (148 aa).

The N-terminal stretch at 1-24 (MGRIIFVSFGLLVVFLSLSGTGAA) is a signal peptide. 3 disulfides stabilise this stretch: cysteine 27-cysteine 38, cysteine 55-cysteine 144, and cysteine 121-cysteine 136. The region spanning 34 to 145 (YDQHCYKVFD…CRLLGHFVCK (112 aa)) is the C-type lectin domain.

Belongs to the snaclec family. Heterodimer; disulfide-linked. Expressed by the venom gland.

The protein resides in the secreted. Interferes with one step of hemostasis (modulation of platelet aggregation, or coagulation cascade, for example). The chain is Snaclec B4 from Macrovipera lebetinus (Levantine viper).